Consider the following 209-residue polypeptide: Thymidylate kinase (209 aa).

10–17 (GLDGAGKS) is a binding site for ATP.

It belongs to the thymidylate kinase family.

It carries out the reaction dTMP + ATP = dTDP + ADP. Phosphorylation of dTMP to form dTDP in both de novo and salvage pathways of dTTP synthesis. The polypeptide is Thymidylate kinase (Francisella tularensis subsp. holarctica (strain OSU18)).